Consider the following 312-residue polypeptide: Methionyl-tRNA formyltransferase (312 aa).

(6S)-5,6,7,8-tetrahydrofolate is bound at residue 112-115 (SLLP).

Belongs to the Fmt family.

It carries out the reaction L-methionyl-tRNA(fMet) + (6R)-10-formyltetrahydrofolate = N-formyl-L-methionyl-tRNA(fMet) + (6S)-5,6,7,8-tetrahydrofolate + H(+). Its function is as follows. Attaches a formyl group to the free amino group of methionyl-tRNA(fMet). The formyl group appears to play a dual role in the initiator identity of N-formylmethionyl-tRNA by promoting its recognition by IF2 and preventing the misappropriation of this tRNA by the elongation apparatus. This chain is Methionyl-tRNA formyltransferase, found in Dehalococcoides mccartyi (strain ATCC BAA-2266 / KCTC 15142 / 195) (Dehalococcoides ethenogenes (strain 195)).